A 134-amino-acid chain; its full sequence is Iron-sulfur cluster insertion protein ErpA (134 aa).

Iron-sulfur cluster-binding residues include Cys-47, Cys-126, and Cys-128.

The protein belongs to the HesB/IscA family. In terms of assembly, homodimer. It depends on iron-sulfur cluster as a cofactor.

Functionally, required for insertion of 4Fe-4S clusters for at least IspG. This is Iron-sulfur cluster insertion protein ErpA from Coxiella burnetii (strain Dugway 5J108-111).